The chain runs to 141 residues: Endoribonuclease YbeY (141 aa).

Zn(2+) is bound by residues His105, His109, and Asp115.

This sequence belongs to the endoribonuclease YbeY family. Requires Zn(2+) as cofactor.

Its subcellular location is the cytoplasm. In terms of biological role, single strand-specific metallo-endoribonuclease involved in late-stage 70S ribosome quality control and in maturation of the 3' terminus of the 16S rRNA. This is Endoribonuclease YbeY from Karelsulcia muelleri (strain GWSS) (Sulcia muelleri).